The primary structure comprises 721 residues: K(+)-insensitive pyrophosphate-energized proton pump (721 aa).

Transmembrane regions (helical) follow at residues 8–28 (LLGV…AVWV), 57–77 (YRTL…AIDM), 82–102 (FGLT…AGYL), 136–156 (VMGL…YLVF), and 168–188 (LVAL…GGGI). Substrate is bound at residue lysine 191. Mg(2+) is bound by residues aspartate 194, aspartate 198, asparagine 221, and aspartate 224. 5 helical membrane-spanning segments follow: residues 247-267 (AIFL…IILF), 294-314 (ISLA…IGAF), 323-343 (ALAL…IVKI), 374-394 (YGVG…VLGI), and 416-436 (AGIF…GIII). Aspartate 446 is a binding site for Mg(2+). The next 4 helical transmembrane spans lie at 483–503 (AIAS…FEIV), 527–547 (LINA…YFFS), 599–619 (FLIP…LLGW), and 621–641 (ALAG…LLMA). Ca(2+) is bound by residues aspartate 648, aspartate 672, and aspartate 676. Lysine 679 contributes to the substrate binding site. The helical transmembrane segment at 698-718 (VVFTYVIVSTNIALGIWPSGL) threads the bilayer.

Belongs to the H(+)-translocating pyrophosphatase (TC 3.A.10) family. K(+)-insensitive subfamily. Homodimer. Mg(2+) serves as cofactor.

It is found in the cell membrane. The enzyme catalyses diphosphate + H2O + H(+)(in) = 2 phosphate + 2 H(+)(out). In terms of biological role, proton pump that utilizes the energy of pyrophosphate hydrolysis as the driving force for proton movement across the membrane. Generates a proton motive force. The protein is K(+)-insensitive pyrophosphate-energized proton pump of Pyrobaculum aerophilum (strain ATCC 51768 / DSM 7523 / JCM 9630 / CIP 104966 / NBRC 100827 / IM2).